Here is a 489-residue protein sequence, read N- to C-terminus: Probable cytochrome P450 522A1 (489 aa).

A helical membrane pass occupies residues 1 to 21 (MILTIVIIILTVIFVNKYLLN). Cys-433 contributes to the heme binding site.

It belongs to the cytochrome P450 family. The cofactor is heme.

The protein localises to the membrane. The polypeptide is Probable cytochrome P450 522A1 (cyp522A1) (Dictyostelium discoideum (Social amoeba)).